We begin with the raw amino-acid sequence, 457 residues long: Bifunctional protein GlmU (457 aa).

The interval 1–229 (MYNCAIILAA…YEEIMGVNSR (229 aa)) is pyrophosphorylase. UDP-N-acetyl-alpha-D-glucosamine-binding positions include 8 to 11 (LAAG), Lys22, Gln73, and 78 to 79 (GT). A Mg(2+)-binding site is contributed by Asp103. Residues Gly140, Glu155, Asn170, and Asn227 each contribute to the UDP-N-acetyl-alpha-D-glucosamine site. Asn227 provides a ligand contact to Mg(2+). The linker stretch occupies residues 230–250 (VQLSEAEIVMRKRINHKHMVN). Residues 251–457 (GVTFIDCEST…WLDKKGLLKK (207 aa)) form an N-acetyltransferase region. The UDP-N-acetyl-alpha-D-glucosamine site is built by Arg332 and Lys350. His362 acts as the Proton acceptor in catalysis. UDP-N-acetyl-alpha-D-glucosamine is bound by residues Tyr365 and Asn376. Acetyl-CoA contacts are provided by residues 385 to 386 (NY), Ala422, and Arg439.

In the N-terminal section; belongs to the N-acetylglucosamine-1-phosphate uridyltransferase family. The protein in the C-terminal section; belongs to the transferase hexapeptide repeat family. Homotrimer. Mg(2+) is required as a cofactor.

Its subcellular location is the cytoplasm. The catalysed reaction is alpha-D-glucosamine 1-phosphate + acetyl-CoA = N-acetyl-alpha-D-glucosamine 1-phosphate + CoA + H(+). The enzyme catalyses N-acetyl-alpha-D-glucosamine 1-phosphate + UTP + H(+) = UDP-N-acetyl-alpha-D-glucosamine + diphosphate. The protein operates within nucleotide-sugar biosynthesis; UDP-N-acetyl-alpha-D-glucosamine biosynthesis; N-acetyl-alpha-D-glucosamine 1-phosphate from alpha-D-glucosamine 6-phosphate (route II): step 2/2. Its pathway is nucleotide-sugar biosynthesis; UDP-N-acetyl-alpha-D-glucosamine biosynthesis; UDP-N-acetyl-alpha-D-glucosamine from N-acetyl-alpha-D-glucosamine 1-phosphate: step 1/1. It functions in the pathway bacterial outer membrane biogenesis; LPS lipid A biosynthesis. Catalyzes the last two sequential reactions in the de novo biosynthetic pathway for UDP-N-acetylglucosamine (UDP-GlcNAc). The C-terminal domain catalyzes the transfer of acetyl group from acetyl coenzyme A to glucosamine-1-phosphate (GlcN-1-P) to produce N-acetylglucosamine-1-phosphate (GlcNAc-1-P), which is converted into UDP-GlcNAc by the transfer of uridine 5-monophosphate (from uridine 5-triphosphate), a reaction catalyzed by the N-terminal domain. The sequence is that of Bifunctional protein GlmU from Clostridium botulinum (strain Langeland / NCTC 10281 / Type F).